The following is a 499-amino-acid chain: Putative DBH-like monooxygenase protein 2 (499 aa).

The first 16 residues, 1-16, serve as a signal peptide directing secretion; sequence MAHDLLFRLFPLLALG. Residues 40–156 form the DOMON domain; sequence NVIFLRWDFD…NTVRVLAAYG (117 aa). Tyr-209 is an active-site residue. Disulfide bonds link Cys-211/Cys-261 and Cys-248/Cys-271. Asn-236 carries an N-linked (GlcNAc...) asparagine glycan. The Cu cation site is built by His-241 and His-242. Asn-250 is a glycosylation site (N-linked (GlcNAc...) asparagine). Residues His-308, His-389, and His-391 each contribute to the Cu cation site. 2 cysteine pairs are disulfide-bonded: Cys-365-Cys-480 and Cys-443-Cys-465. His-389 is a catalytic residue. Asn-404 carries N-linked (GlcNAc...) asparagine glycosylation. A Cu cation-binding site is contributed by Met-464. Residue Asn-476 is glycosylated (N-linked (GlcNAc...) asparagine).

This sequence belongs to the copper type II ascorbate-dependent monooxygenase family. The cofactor is Cu(2+).

The polypeptide is Putative DBH-like monooxygenase protein 2 (MOXD2P) (Homo sapiens (Human)).